The sequence spans 365 residues: Carbamoyl phosphate synthase small chain (365 aa).

2 CPSase regions span residues 1–166 (MKRQ…PSPG) and 1–169 (MKRQ…GRGH). L-glutamine-binding residues include serine 45, glycine 218, and glycine 220. The Glutamine amidotransferase type-1 domain occupies 170–357 (RVVLVDFGMK…LTMIENFKKE (188 aa)). Cysteine 245 serves as the catalytic Nucleophile. Leucine 246, glutamine 249, asparagine 287, glycine 289, and tyrosine 290 together coordinate L-glutamine. Catalysis depends on residues histidine 330 and glutamate 332.

This sequence belongs to the CarA family. As to quaternary structure, composed of two chains; the small (or glutamine) chain promotes the hydrolysis of glutamine to ammonia, which is used by the large (or ammonia) chain to synthesize carbamoyl phosphate. Tetramer of heterodimers (alpha,beta)4.

It catalyses the reaction hydrogencarbonate + L-glutamine + 2 ATP + H2O = carbamoyl phosphate + L-glutamate + 2 ADP + phosphate + 2 H(+). The catalysed reaction is L-glutamine + H2O = L-glutamate + NH4(+). Its pathway is amino-acid biosynthesis; L-arginine biosynthesis; carbamoyl phosphate from bicarbonate: step 1/1. It functions in the pathway pyrimidine metabolism; UMP biosynthesis via de novo pathway; (S)-dihydroorotate from bicarbonate: step 1/3. Functionally, small subunit of the glutamine-dependent carbamoyl phosphate synthetase (CPSase). CPSase catalyzes the formation of carbamoyl phosphate from the ammonia moiety of glutamine, carbonate, and phosphate donated by ATP, constituting the first step of 2 biosynthetic pathways, one leading to arginine and/or urea and the other to pyrimidine nucleotides. The small subunit (glutamine amidotransferase) binds and cleaves glutamine to supply the large subunit with the substrate ammonia. The protein is Carbamoyl phosphate synthase small chain of Bacillus cereus (strain ATCC 10987 / NRS 248).